Consider the following 223-residue polypeptide: Pyridoxine/pyridoxamine 5'-phosphate oxidase (223 aa).

Substrate is bound by residues 8-11 (RVDY) and K65. FMN contacts are provided by residues 60–65 (RTVLLK), 75–76 (YT), R81, K82, and Q104. Residues Y122, R126, and S130 each contribute to the substrate site. Residues 139 to 140 (QS) and W188 contribute to the FMN site. Residue 194 to 196 (RLH) participates in substrate binding. R198 provides a ligand contact to FMN.

The protein belongs to the pyridoxamine 5'-phosphate oxidase family. As to quaternary structure, homodimer. The cofactor is FMN.

It carries out the reaction pyridoxamine 5'-phosphate + O2 + H2O = pyridoxal 5'-phosphate + H2O2 + NH4(+). It catalyses the reaction pyridoxine 5'-phosphate + O2 = pyridoxal 5'-phosphate + H2O2. It functions in the pathway cofactor metabolism; pyridoxal 5'-phosphate salvage; pyridoxal 5'-phosphate from pyridoxamine 5'-phosphate: step 1/1. It participates in cofactor metabolism; pyridoxal 5'-phosphate salvage; pyridoxal 5'-phosphate from pyridoxine 5'-phosphate: step 1/1. Its function is as follows. Catalyzes the oxidation of either pyridoxine 5'-phosphate (PNP) or pyridoxamine 5'-phosphate (PMP) into pyridoxal 5'-phosphate (PLP). The polypeptide is Pyridoxine/pyridoxamine 5'-phosphate oxidase (Kineococcus radiotolerans (strain ATCC BAA-149 / DSM 14245 / SRS30216)).